Reading from the N-terminus, the 102-residue chain is NADH-quinone oxidoreductase subunit K 1 (102 aa).

A run of 3 helical transmembrane segments spans residues 5 to 25 (FEHVLILAGILFALGLVCVLV), 30 to 50 (LIMLLIGIEVMLNAAMLAFVG), and 65 to 85 (LVIMALTSAEVSLALAMVVYL).

The protein belongs to the complex I subunit 4L family. NDH-1 is composed of 14 different subunits. Subunits NuoA, H, J, K, L, M, N constitute the membrane sector of the complex.

The protein localises to the cell inner membrane. It catalyses the reaction a quinone + NADH + 5 H(+)(in) = a quinol + NAD(+) + 4 H(+)(out). Functionally, NDH-1 shuttles electrons from NADH, via FMN and iron-sulfur (Fe-S) centers, to quinones in the respiratory chain. The immediate electron acceptor for the enzyme in this species is believed to be ubiquinone. Couples the redox reaction to proton translocation (for every two electrons transferred, four hydrogen ions are translocated across the cytoplasmic membrane), and thus conserves the redox energy in a proton gradient. The sequence is that of NADH-quinone oxidoreductase subunit K 1 from Geobacter metallireducens (strain ATCC 53774 / DSM 7210 / GS-15).